Consider the following 226-residue polypeptide: Exosome complex component rrp46 (226 aa).

Residues 205–226 form a disordered region; sequence NESDGHENEKNPKEDVEMDVVA. The span at 207–219 shows a compositional bias: basic and acidic residues; sequence SDGHENEKNPKED.

It belongs to the RNase PH family. In terms of assembly, component of the RNA exosome complex. Specifically part of the catalytically inactive RNA exosome core complex (Exo-9) which may associate with the catalytic subunits rrp6 and dis3 in cytoplasmic- and nuclear-specific RNA exosome complex forms. Exo-9 is formed by a hexameric base ring of RNase PH domain-containing subunits and a cap ring consisting of csl4, rrp4 and rrp40.

The protein resides in the cytoplasm. The protein localises to the nucleus. It is found in the nucleolus. Non-catalytic component of the RNA exosome complex which has 3'-&gt;5' exoribonuclease activity and participates in a multitude of cellular RNA processing and degradation events. In the nucleus, the RNA exosome complex is involved in proper maturation of stable RNA species such as rRNA, snRNA and snoRNA, in the elimination of RNA processing by-products and non-coding 'pervasive' transcripts, such as antisense RNA species and cryptic unstable transcripts (CUTs), and of mRNAs with processing defects, thereby limiting or excluding their export to the cytoplasm. In the cytoplasm, the RNA exosome complex is involved in general mRNA turnover and in RNA surveillance pathways, preventing translation of aberrant mRNAs. The catalytic inactive RNA exosome core complex of 9 subunits (Exo-9) is proposed to play a pivotal role in the binding and presentation of RNA for ribonucleolysis, and to serve as a scaffold for the association with catalytic subunits and accessory proteins or complexes. ski6 is part of the hexameric ring of RNase PH domain-containing subunits proposed to form a central channel which threads RNA substrates for degradation. This Schizosaccharomyces pombe (strain 972 / ATCC 24843) (Fission yeast) protein is Exosome complex component rrp46 (rrp46).